Reading from the N-terminus, the 154-residue chain is Endoribonuclease YbeY (154 aa).

Positions 117, 121, and 127 each coordinate Zn(2+).

The protein belongs to the endoribonuclease YbeY family. Requires Zn(2+) as cofactor.

The protein localises to the cytoplasm. In terms of biological role, single strand-specific metallo-endoribonuclease involved in late-stage 70S ribosome quality control and in maturation of the 3' terminus of the 16S rRNA. This is Endoribonuclease YbeY from Mycoplasma pneumoniae (strain ATCC 29342 / M129 / Subtype 1) (Mycoplasmoides pneumoniae).